The chain runs to 356 residues: Phosphoribosylformylglycinamidine cyclo-ligase (356 aa).

The protein belongs to the AIR synthase family.

Its subcellular location is the cytoplasm. The catalysed reaction is 2-formamido-N(1)-(5-O-phospho-beta-D-ribosyl)acetamidine + ATP = 5-amino-1-(5-phospho-beta-D-ribosyl)imidazole + ADP + phosphate + H(+). The protein operates within purine metabolism; IMP biosynthesis via de novo pathway; 5-amino-1-(5-phospho-D-ribosyl)imidazole from N(2)-formyl-N(1)-(5-phospho-D-ribosyl)glycinamide: step 2/2. The sequence is that of Phosphoribosylformylglycinamidine cyclo-ligase from Sinorhizobium medicae (strain WSM419) (Ensifer medicae).